The following is a 78-amino-acid chain: Apolipoprotein C-I (78 aa).

The N-terminal stretch at 1 to 26 (MRLILWLPVLVVVLLMVTEGPAPAQG) is a signal peptide.

Belongs to the apolipoprotein C1 family.

It localises to the secreted. In terms of biological role, inhibitor of lipoprotein binding to the low density lipoprotein (LDL) receptor, LDL receptor-related protein, and very low density lipoprotein (VLDL) receptor. Associates with high density lipoproteins (HDL) and the triacylglycerol-rich lipoproteins in the plasma and makes up about 10% of the protein of the VLDL and 2% of that of HDL. Appears to interfere directly with fatty acid uptake and is also the major plasma inhibitor of cholesteryl ester transfer protein (CETP). Binds free fatty acids and reduces their intracellular esterification. Modulates the interaction of APOE with beta-migrating VLDL and inhibits binding of beta-VLDL to the LDL receptor-related protein. In Panthera tigris altaica (Siberian tiger), this protein is Apolipoprotein C-I (APOC1).